A 320-amino-acid polypeptide reads, in one-letter code: RNA polymerase sigma factor SigA2 (320 aa).

Residues 89–159 form a sigma-70 factor domain-2 region; that stretch reads MIEANLRLVV…TRAIAQQSRT (71 aa). The Interaction with polymerase core subunit RpoC signature appears at 113–116; that stretch reads DLIQ. The tract at residues 168-243 is sigma-70 factor domain-3; it reads EKLNKLKKTQ…EDEQSSPSDY (76 aa). The sigma-70 factor domain-4 stretch occupies residues 256 to 310; the sequence is LMAELTPQQQAVIALRYGLDEGDSLSLAKVGERLNISRERVRKLERQAMDHLRRR. Residues 282-301 constitute a DNA-binding region (H-T-H motif); that stretch reads LAKVGERLNISRERVRKLER.

The protein belongs to the sigma-70 factor family.

The protein localises to the cytoplasm. Functionally, sigma factors are initiation factors that promote the attachment of RNA polymerase to specific initiation sites and are then released. This sigma factor is a component of the biological clock pathway that affects the circadian expression of a subset of genes in this bacterium. This Synechococcus elongatus (strain ATCC 33912 / PCC 7942 / FACHB-805) (Anacystis nidulans R2) protein is RNA polymerase sigma factor SigA2 (sigA2).